Consider the following 603-residue polypeptide: F-box only protein 46 (603 aa).

A disordered region spans residues 18-54; sequence SKYSQNQPRPPSTALKPPVCPDTSSGTEPDHRPAHLE. A phosphoserine mark is found at Ser21 and Ser67. Disordered regions lie at residues 113–165, 235–301, 332–359, and 412–442; these read SRAS…SSGD, EAQR…TRAK, EASE…ARDC, and QSRG…GTTD. Thr347 is subject to Phosphothreonine. 2 stretches are compositionally biased toward pro residues: residues 347–356 and 417–426; these read TPPAPPPPPA and EGPPEPPPAD. An F-box domain is found at 470–522; it reads RQYMLLLPEHVLVKIFSFLPTRALAALKCTCHHFKGIIEAFGVRATDSRWSRD.

In terms of assembly, part of a SCF (SKP1-cullin-F-box) protein ligase complex SCF(FBXO46) composed of CUL1, SKP1, RBX1 and FBXO46. Phosphorylated by ATM in response to DNA damage, promoting ubiquitination and degradation by the SCF(FBXO31) complex. In terms of processing, ATM-phosphorylated FBXO46 is ubiquitinated and degradaded by the SCF(FBXO31) complex in response to DNA damage.

It participates in protein modification; protein ubiquitination. Functionally, substrate-recognition component of the SCF(FBXO46) protein ligase complex, which mediates the ubiquitination and degradation of target proteins. In absence of stress, the SCF(FBXO46) complex catalyzes ubiquitination and degradation of MTOR-phosphorylated FBXO31. This is F-box only protein 46 (Fbxo46) from Mus musculus (Mouse).